The sequence spans 31 residues: Fibrinogen beta chain (31 aa).

The span at 1–10 shows a compositional bias: acidic residues; it reads HYYDDTDEEE. The interval 1-31 is disordered; that stretch reads HYYDDTDEEERIVSTVDARGHRPLDKKREEA. A Sulfotyrosine; partial modification is found at Tyr2. Residue Tyr3 is modified to Sulfotyrosine. The segment covering 18–31 has biased composition (basic and acidic residues); that stretch reads ARGHRPLDKKREEA.

Heterohexamer; disulfide linked. Contains 2 sets of 3 non-identical chains (alpha, beta and gamma). The 2 heterotrimers are in head to head conformation with the N-termini in a small central domain. Post-translationally, conversion of fibrinogen to fibrin is triggered by thrombin, which cleaves fibrinopeptides A and B from alpha and beta chains, and thus exposes the N-terminal polymerization sites responsible for the formation of the soft clot.

The protein resides in the secreted. Cleaved by the protease thrombin to yield monomers which, together with fibrinogen alpha (FGA) and fibrinogen gamma (FGG), polymerize to form an insoluble fibrin matrix. Fibrin has a major function in hemostasis as one of the primary components of blood clots. In addition, functions during the early stages of wound repair to stabilize the lesion and guide cell migration during re-epithelialization. Was originally thought to be essential for platelet aggregation, based on in vitro studies using anticoagulated blood. However subsequent studies have shown that it is not absolutely required for thrombus formation in vivo. Enhances expression of SELP in activated platelets. Maternal fibrinogen is essential for successful pregnancy. Fibrin deposition is also associated with infection, where it protects against IFNG-mediated hemorrhage. May also facilitate the antibacterial immune response via both innate and T-cell mediated pathways. The sequence is that of Fibrinogen beta chain (FGB) from Canis lupus familiaris (Dog).